The sequence spans 97 residues: Large ribosomal subunit protein bL27 (97 aa).

Residues 1–12 constitute a propeptide that is removed on maturation; it reads MLKMNLANLQLF. The tract at residues 14–37 is disordered; that stretch reads HKKGGGSTSNGRDSQAKRLGAKAA.

This sequence belongs to the bacterial ribosomal protein bL27 family. The N-terminus is cleaved by ribosomal processing cysteine protease Prp.

The sequence is that of Large ribosomal subunit protein bL27 from Streptococcus uberis (strain ATCC BAA-854 / 0140J).